A 146-amino-acid polypeptide reads, in one-letter code: Large ribosomal subunit protein uL15 (146 aa).

Residues 1-65 form a disordered region; it reads MSDIQLNTLK…GQMPLQRRLP (65 aa). Positions 24–34 are enriched in gly residues; the sequence is RGIGSGLGKTA.

This sequence belongs to the universal ribosomal protein uL15 family. In terms of assembly, part of the 50S ribosomal subunit.

Functionally, binds to the 23S rRNA. This chain is Large ribosomal subunit protein uL15, found in Bordetella parapertussis (strain 12822 / ATCC BAA-587 / NCTC 13253).